The following is a 259-amino-acid chain: UPF0246 protein PST_1170 (259 aa).

The protein belongs to the UPF0246 family.

This chain is UPF0246 protein PST_1170, found in Stutzerimonas stutzeri (strain A1501) (Pseudomonas stutzeri).